Consider the following 145-residue polypeptide: D-aminoacyl-tRNA deacylase (145 aa).

The short motif at 137-138 (GP) is the Gly-cisPro motif, important for rejection of L-amino acids element.

It belongs to the DTD family. Homodimer.

The protein localises to the cytoplasm. The catalysed reaction is glycyl-tRNA(Ala) + H2O = tRNA(Ala) + glycine + H(+). It catalyses the reaction a D-aminoacyl-tRNA + H2O = a tRNA + a D-alpha-amino acid + H(+). In terms of biological role, an aminoacyl-tRNA editing enzyme that deacylates mischarged D-aminoacyl-tRNAs. Also deacylates mischarged glycyl-tRNA(Ala), protecting cells against glycine mischarging by AlaRS. Acts via tRNA-based rather than protein-based catalysis; rejects L-amino acids rather than detecting D-amino acids in the active site. By recycling D-aminoacyl-tRNA to D-amino acids and free tRNA molecules, this enzyme counteracts the toxicity associated with the formation of D-aminoacyl-tRNA entities in vivo and helps enforce protein L-homochirality. The polypeptide is D-aminoacyl-tRNA deacylase (Lactobacillus acidophilus (strain ATCC 700396 / NCK56 / N2 / NCFM)).